Consider the following 901-residue polypeptide: HTH-type transcriptional regulator MalT (901 aa).

39–46 is an ATP binding site; the sequence is SPAGYGKT. The 66-residue stretch at 829-894 folds into the HTH luxR-type domain; the sequence is ELIRTSPLTQ…DAVQHAQQLL (66 aa). The H-T-H motif DNA-binding region spans 853 to 872; it reads NEQIAGELDVAATTIKTHIR.

This sequence belongs to the MalT family. Monomer in solution. Oligomerizes to an active state in the presence of the positive effectors ATP and maltotriose.

Its activity is regulated as follows. Activated by ATP and maltotriose, which are both required for DNA binding. In terms of biological role, positively regulates the transcription of the maltose regulon whose gene products are responsible for uptake and catabolism of malto-oligosaccharides. Specifically binds to the promoter region of its target genes, recognizing a short DNA motif called the MalT box. In Klebsiella pneumoniae subsp. pneumoniae (strain ATCC 700721 / MGH 78578), this protein is HTH-type transcriptional regulator MalT.